We begin with the raw amino-acid sequence, 141 residues long: Hemoglobin subunit alpha (141 aa).

The Globin domain occupies 1-141; that stretch reads VLSSTDKSNV…VSTVLTSKYR (141 aa). Serine 3 is modified (phosphoserine). Lysine 7 and lysine 11 each carry N6-succinyllysine. Lysine 16 bears the N6-acetyllysine; alternate mark. Position 16 is an N6-succinyllysine; alternate (lysine 16). Position 24 is a phosphotyrosine (tyrosine 24). At serine 35 the chain carries Phosphoserine. Lysine 40 carries the post-translational modification N6-succinyllysine. Histidine 58 is a binding site for O2. Histidine 87 serves as a coordination point for heme b. Residue serine 102 is modified to Phosphoserine. Position 108 is a phosphothreonine (threonine 108). Phosphoserine is present on residues serine 124 and serine 131. A phosphothreonine mark is found at threonine 134 and threonine 137. The residue at position 138 (serine 138) is a Phosphoserine.

The protein belongs to the globin family. In terms of assembly, heterotetramer of two alpha chains and two beta chains. Red blood cells.

In terms of biological role, involved in oxygen transport from the lung to the various peripheral tissues. Its function is as follows. Hemopressin acts as an antagonist peptide of the cannabinoid receptor CNR1. Hemopressin-binding efficiently blocks cannabinoid receptor CNR1 and subsequent signaling. The chain is Hemoglobin subunit alpha (HBA) from Pteropus alecto (Black flying fox).